Reading from the N-terminus, the 337-residue chain is MIQDGIKKIIQREDLSETEMSAVMSEIMSGEATDAQIGAFMGALATKGETFEELAGAARTMRRKAARIQVTSPVIVDTCGTGGDRKGTFNISTTAAFVVAGCGVTVAKHGNRSVSSQCGSADLLEALGMRLDAPAEVVEEAIGRIGIGFLFAPLFHGAMRHAARARKEVGVRSIFNMLGPLTNPAGANCQVLGVYAPQLTEMFAQALRLLGARRAFVVHGQDGLDEISVCAPTRVSELDGGLVRTYDLQPELLLGRKADPEDLAGGDPGVNAKITRDVLGGAIGPRRDVVVLNAAAALIAAGAAEGFPSAVRNAEESIDGGKAIEKLEALVRYTNEN.

5-phospho-alpha-D-ribose 1-diphosphate is bound by residues Gly80, 83 to 84 (GD), Thr88, 90 to 93 (NIST), 108 to 116 (KHGNRSVSS), and Ser120. Gly80 is a binding site for anthranilate. Ser92 provides a ligand contact to Mg(2+). An anthranilate-binding site is contributed by Asn111. Arg166 contributes to the anthranilate binding site. 2 residues coordinate Mg(2+): Asp225 and Glu226.

It belongs to the anthranilate phosphoribosyltransferase family. As to quaternary structure, homodimer. Mg(2+) is required as a cofactor.

The enzyme catalyses N-(5-phospho-beta-D-ribosyl)anthranilate + diphosphate = 5-phospho-alpha-D-ribose 1-diphosphate + anthranilate. Its pathway is amino-acid biosynthesis; L-tryptophan biosynthesis; L-tryptophan from chorismate: step 2/5. Its function is as follows. Catalyzes the transfer of the phosphoribosyl group of 5-phosphorylribose-1-pyrophosphate (PRPP) to anthranilate to yield N-(5'-phosphoribosyl)-anthranilate (PRA). In Syntrophobacter fumaroxidans (strain DSM 10017 / MPOB), this protein is Anthranilate phosphoribosyltransferase.